Here is a 360-residue protein sequence, read N- to C-terminus: Phospho-N-acetylmuramoyl-pentapeptide-transferase (360 aa).

10 consecutive transmembrane segments (helical) span residues 25-45, 73-93, 97-117, 142-162, 167-187, 199-219, 236-256, 263-283, 288-308, and 338-358; these read RGILSVLTALSLSLWLGPWMI, TMGGALILTAIAISTLLWADL, YVWVVLVVTLLFGAIGWVDDY, IGAAVFLYMTAETPIETTLIV, SVEIQLGIFFVVLTYFVIVGS, GLAIMPTVMVAGALGIFCYLS, AGELIVFCAALVGAGLGFLWF, VFMGDVGALALGAALGTIAVI, IVLFIMGGVFVMETLSVMIQV, and VIVRFWIITVILVLIGLATLK.

Belongs to the glycosyltransferase 4 family. MraY subfamily. The cofactor is Mg(2+).

The protein localises to the cell inner membrane. It carries out the reaction UDP-N-acetyl-alpha-D-muramoyl-L-alanyl-gamma-D-glutamyl-meso-2,6-diaminopimeloyl-D-alanyl-D-alanine + di-trans,octa-cis-undecaprenyl phosphate = di-trans,octa-cis-undecaprenyl diphospho-N-acetyl-alpha-D-muramoyl-L-alanyl-D-glutamyl-meso-2,6-diaminopimeloyl-D-alanyl-D-alanine + UMP. It participates in cell wall biogenesis; peptidoglycan biosynthesis. Its function is as follows. Catalyzes the initial step of the lipid cycle reactions in the biosynthesis of the cell wall peptidoglycan: transfers peptidoglycan precursor phospho-MurNAc-pentapeptide from UDP-MurNAc-pentapeptide onto the lipid carrier undecaprenyl phosphate, yielding undecaprenyl-pyrophosphoryl-MurNAc-pentapeptide, known as lipid I. The polypeptide is Phospho-N-acetylmuramoyl-pentapeptide-transferase (Pseudomonas aeruginosa (strain LESB58)).